Consider the following 205-residue polypeptide: Holliday junction branch migration complex subunit RuvA (205 aa).

The segment at Met-1–Ile-64 is domain I. Positions Ser-65 to Glu-143 are domain II. Positions Arg-144 to Glu-156 are flexible linker. The interval Ala-157–Leu-205 is domain III.

Belongs to the RuvA family. As to quaternary structure, homotetramer. Forms an RuvA(8)-RuvB(12)-Holliday junction (HJ) complex. HJ DNA is sandwiched between 2 RuvA tetramers; dsDNA enters through RuvA and exits via RuvB. An RuvB hexamer assembles on each DNA strand where it exits the tetramer. Each RuvB hexamer is contacted by two RuvA subunits (via domain III) on 2 adjacent RuvB subunits; this complex drives branch migration. In the full resolvosome a probable DNA-RuvA(4)-RuvB(12)-RuvC(2) complex forms which resolves the HJ.

The protein localises to the cytoplasm. The RuvA-RuvB-RuvC complex processes Holliday junction (HJ) DNA during genetic recombination and DNA repair, while the RuvA-RuvB complex plays an important role in the rescue of blocked DNA replication forks via replication fork reversal (RFR). RuvA specifically binds to HJ cruciform DNA, conferring on it an open structure. The RuvB hexamer acts as an ATP-dependent pump, pulling dsDNA into and through the RuvAB complex. HJ branch migration allows RuvC to scan DNA until it finds its consensus sequence, where it cleaves and resolves the cruciform DNA. The protein is Holliday junction branch migration complex subunit RuvA of Shewanella halifaxensis (strain HAW-EB4).